Consider the following 192-residue polypeptide: UPF0312 protein PputW619_0484 (192 aa).

The first 23 residues, 1 to 23 (MLKKTFAALALGTALLSAGQAMA), serve as a signal peptide directing secretion.

Belongs to the UPF0312 family. Type 1 subfamily.

It is found in the periplasm. The polypeptide is UPF0312 protein PputW619_0484 (Pseudomonas putida (strain W619)).